A 298-amino-acid chain; its full sequence is uncharacterized protein (298 aa).

Its subcellular location is the cytoplasm. The protein resides in the nucleus. This is an uncharacterized protein from Schizosaccharomyces pombe (strain 972 / ATCC 24843) (Fission yeast).